Consider the following 1254-residue polypeptide: Structural polyprotein (1254 aa).

Residues 43 to 77 (LQAQQMQQLISAVSALTTKQNVKAPKGQRQKKQQK) form a host transcription inhibition region. The tract at residues 60–113 (TKQNVKAPKGQRQKKQQKPKEKKENQKKKPTQKKKQQQKPKPQAKKKKPGRRER) is disordered. The short motif at 70-108 (QRQKKQQKPKEKKENQKKKPTQKKKQQQKPKPQAKKKKP) is the Nuclear localization signal element. The segment covering 84-110 (NQKKKPTQKKKQQQKPKPQAKKKKPGR) has biased composition (basic residues). The tract at residues 95 to 123 (QQQKPKPQAKKKKPGRRERMCMKIENDCI) is binding to the viral RNA. The ribosome-binding stretch occupies residues 108-122 (PGRRERMCMKIENDC). Cysteine 122 and cysteine 137 form a disulfide bridge. In terms of domain architecture, Peptidase S3 spans 122–270 (CIFEVKLDGK…RVTPEGTEEW (149 aa)). Histidine 148 serves as the catalytic Charge relay system. Residues 153 to 163 (IDNPDLAKLTY) carry the Nuclear export signal motif. An interaction with spike glycoprotein E2 region spans residues 164 to 169 (KKSSKY). Aspartate 170 serves as the catalytic Charge relay system. The dimerization of the capsid protein stretch occupies residues 192 to 202 (PEGHYNWHHGA). The Charge relay system role is filled by serine 222. The tract at residues 228–232 (DNKGR) is dimerization of the capsid protein. Residues 271-282 (SAALMMCILANT) are functions as an uncleaved signal peptide for the precursor of protein E3/E2. Topologically, residues 271-694 (SAALMMCILA…PHEIIQYYYG (424 aa)) are extracellular. Intrachain disulfides connect cysteine 277-cysteine 286, cysteine 291-cysteine 295, and cysteine 294-cysteine 326. N-linked (GlcNAc...) asparagine; by host glycosylation is present at asparagine 281. The N-linked (GlcNAc...) asparagine; by host glycan is linked to asparagine 328. 6 cysteine pairs are disulfide-bonded: cysteine 353–cysteine 459, cysteine 356–cysteine 362, cysteine 425–cysteine 439, cysteine 487–cysteine 599, cysteine 535–cysteine 559, and cysteine 537–cysteine 554. Interaction with host Mxra8 receptor stretches follow at residues 360-363 (YFCY) and 396-398 (HAH). The tract at residues 518 to 521 (TAGN) is interaction with host Mxra8 receptor. N-linked (GlcNAc...) asparagine; by host glycosylation occurs at asparagine 534. Residues 550 to 556 (TINTCKI) form an interaction with host Mxra8 receptor region. Asparagine 596 is a glycosylation site (N-linked (GlcNAc...) asparagine; by host). The helical transmembrane segment at 695–715 (LYPAATIAAVSGASLMALLTL) threads the bilayer. Over 716 to 756 (AATCCMLATARRKCLTPYALTPGAVVPLTLGLLCCAPRANA) the chain is Cytoplasmic. Residue cysteine 719 is the site of S-palmitoyl cysteine; by host attachment. An interaction with the capsid protein region spans residues 724–728 (TARRK). 3 S-palmitoyl cysteine; by host lipidation sites follow: cysteine 729, cysteine 749, and cysteine 750. The tract at residues 729–749 (CLTPYALTPGAVVPLTLGLLC) is transient transmembrane before p62-6K protein processing. A disulfide bridge connects residues cysteine 729 and cysteine 750. At 757 to 771 (ASFAETMAYLWDENK) the chain is on the extracellular side. Residues 772 to 792 (TLFWMEFAAPAAALALLACCI) form a helical membrane-spanning segment. A topological domain (cytoplasmic) is located at residue lysine 793. A helical transmembrane segment spans residues 794–814 (SLICCCKPFSFLVLLSLGASA). Over 815-1231 (KAYEHTATIP…AMTWVQRLAS (417 aa)) the chain is Extracellular. Cystine bridges form between cysteine 865–cysteine 930, cysteine 878–cysteine 910, cysteine 879–cysteine 912, and cysteine 884–cysteine 894. The segment at 900–917 (VYPFMWGGAYCFCDSENT) is E1 fusion peptide loop. Asparagine 957 is a glycosylation site (N-linked (GlcNAc...) asparagine; by host). Disulfide bonds link cysteine 1075-cysteine 1087, cysteine 1117-cysteine 1192, cysteine 1122-cysteine 1196, and cysteine 1144-cysteine 1186. The chain crosses the membrane as a helical span at residues 1232–1252 (GLGGLALIAVVVLVLVTCITM). Cysteine 1249 is lipidated: S-palmitoyl cysteine; by host. A lipid anchor (S-stearoyl cysteine; by host) is attached at cysteine 1249. Residues 1253–1254 (RR) lie on the Cytoplasmic side of the membrane.

In terms of assembly, homodimer. Homomultimer. Interacts with host karyopherin KPNA4; this interaction allows the nuclear import of the viral capsid protein. Interacts with spike glycoprotein E2. Interacts with host IRAK1; the interaction leads to inhibition of IRAK1-dependent signaling. As to quaternary structure, the precursor of protein E3/E2 and E1 form a heterodimer shortly after synthesis. Interacts with spike glycoprotein E2. The precursor of protein E3/E2 and E1 form a heterodimer shortly after synthesis. Processing of the precursor of protein E3/E2 into E2 and E3 results in a heterodimer of the spike glycoproteins E2 and E1. Spike at virion surface are constituted of a trimer of E2-E1 heterodimers. After target cell attachment and endocytosis, E1 change conformation to form homotrimers. Interacts with 6K protein. E1/E2 heterodimer interacts with host LDLR. In terms of assembly, interacts with spike glycoprotein E1. Processing of the precursor of protein E3/E2 into E2 and E3 results in a heterodimer of the spike glycoproteins E2 and E1. Spike at virion surface are constituted of a trimer of E2-E1 heterodimers. Interacts with 6K protein. Interacts with host MXRA8; this interaction mediates virus entry. As to quaternary structure, oligomer. Interacts with spike glycoprotein E1. Interacts with spike glycoprotein E2. Structural polyprotein: Specific enzymatic cleavages in vivo yield mature proteins. Capsid protein is auto-cleaved during polyprotein translation, unmasking a signal peptide at the N-terminus of the precursor of E3/E2. The remaining polyprotein is then targeted to the host endoplasmic reticulum, where host signal peptidase cleaves it into pE2, 6K and E1 proteins. pE2 is further processed to mature E3 and E2 by host furin in trans-Golgi vesicle. In terms of processing, palmitoylated via thioester bonds. These palmitoylations may induce disruption of the C-terminus transmembrane. This would result in the reorientation of E2 C-terminus from lumenal to cytoplasmic side. Post-translationally, N-glycosylated. Palmitoylated via thioester bonds.

It is found in the virion. The protein localises to the host cytoplasm. The protein resides in the host cell membrane. It localises to the host nucleus. Its subcellular location is the virion membrane. It is found in the host Golgi apparatus. The protein localises to the host trans-Golgi network. The protein resides in the host endoplasmic reticulum. It catalyses the reaction Autocatalytic release of the core protein from the N-terminus of the togavirus structural polyprotein by hydrolysis of a -Trp-|-Ser- bond.. Its function is as follows. Forms an icosahedral capsid with a T=4 symmetry composed of 240 copies of the capsid protein surrounded by a lipid membrane through which penetrate 80 spikes composed of trimers of E1-E2 heterodimers. The capsid protein binds to the viral RNA genome at a site adjacent to a ribosome binding site for viral genome translation following genome release. Possesses a protease activity that results in its autocatalytic cleavage from the nascent structural protein. Following its self-cleavage, the capsid protein transiently associates with ribosomes, and within several minutes the protein binds to viral RNA and rapidly assembles into icosahedric core particles. The resulting nucleocapsid eventually associates with the cytoplasmic domain of the spike glycoprotein E2 at the cell membrane, leading to budding and formation of mature virions. In case of infection, new virions attach to target cells and after clathrin-mediated endocytosis their membrane fuses with the host endosomal membrane. This leads to the release of the nucleocapsid into the cytoplasm, followed by an uncoating event necessary for the genomic RNA to become accessible. The uncoating might be triggered by the interaction of capsid proteins with ribosomes. Binding of ribosomes would release the genomic RNA since the same region is genomic RNA-binding and ribosome-binding. Specifically inhibits interleukin-1 receptor-associated kinase 1/IRAK1-dependent signaling during viral entry, representing a means by which the alphaviruses may evade innate immune detection and activation prior to viral gene expression. Functionally, provides the signal sequence for the translocation of the precursor of protein E3/E2 to the host endoplasmic reticulum. Furin-cleaved E3 remains associated with spike glycoprotein E1 and mediates pH protection of the latter during the transport via the secretory pathway. After virion release from the host cell, the assembly protein E3 is gradually released in the extracellular space. In terms of biological role, plays a role in viral attachment to target host cell, by binding to the cell receptor MXRA8. The host LDLR may also act as a cell receptor for viral entry. Synthesized as a p62 precursor which is processed by furin at the cell membrane just before virion budding, giving rise to E2-E1 heterodimer. The p62-E1 heterodimer is stable, whereas E2-E1 is unstable and dissociate at low pH. p62 is processed at the last step, presumably to avoid E1 fusion activation before its final export to cell surface. E2 C-terminus contains a transitory transmembrane that would be disrupted by palmitoylation, resulting in reorientation of the C-terminal tail from lumenal to cytoplasmic side. This step is critical since E2 C-terminus is involved in budding by interacting with capsid proteins. This release of E2 C-terminus in cytoplasm occurs lately in protein export, and precludes premature assembly of particles at the endoplasmic reticulum membrane. Acts as a viroporin that participates in virus glycoprotein processing and transport to the plasma membrane, cell permeabilization and budding of viral particles. The cation channel is permeable to Na(+)&gt;K(+)&gt;Ca(2+) in vitro. Disrupts the calcium homeostasis of the cell, probably at the endoplasmic reticulum level. This leads to cytoplasmic calcium elevation. Because of its lipophilic properties, the 6K protein is postulated to influence the selection of lipids that interact with the transmembrane domains of the glycoproteins, which, in turn, affects the deformability of the bilayer required for the extreme curvature that occurs as budding proceeds. Present in low amount in virions, about 3% compared to viral glycoproteins. Its function is as follows. Class II viral fusion protein. Fusion activity is inactive as long as E1 is bound to E2 in mature virion. After virus attachment to target cell via host MXRA8 and endocytosis, acidification of the endosome induce dissociation of E1/E2 heterodimer and concomitant trimerization of the E1 subunits. This E1 trimer is fusion active, and promotes release of viral nucleocapsid in cytoplasm after endosome and viral membrane fusion. Efficient fusion requires the presence of cholesterol and sphingolipid in the target membrane. The sequence is that of Structural polyprotein from Aedes (Common banded mosquito).